Here is a 567-residue protein sequence, read N- to C-terminus: Glucose-6-phosphate isomerase, cytosolic B (567 aa).

Residues 156–157, 212–217, Gln356, Glu360, His391, and Lys516 each bind D-glucose 6-phosphate; these read GS and SKTFTT. Glu360 serves as the catalytic Proton donor. Active-site residues include His391 and Lys516.

The protein belongs to the GPI family. In terms of assembly, homodimer.

It localises to the cytoplasm. The enzyme catalyses alpha-D-glucose 6-phosphate = beta-D-fructose 6-phosphate. It functions in the pathway carbohydrate degradation; glycolysis; D-glyceraldehyde 3-phosphate and glycerone phosphate from D-glucose: step 2/4. Its function is as follows. Catalyzes the conversion of glucose-6-phosphate to fructose-6-phosphate, the second step in glycolysis, and the reverse reaction during gluconeogenesis. This is Glucose-6-phosphate isomerase, cytosolic B from Oryza sativa subsp. japonica (Rice).